The chain runs to 448 residues: Vitamin D3 receptor (448 aa).

A DNA-binding region (nuclear receptor) is located at residues 41 to 116 (PRICGVCGDR…IGMMKEFILT (76 aa)). Positions 44, 47, 61, 64, 80, 86, 96, and 99 each coordinate Zn(2+). 2 NR C4-type zinc fingers span residues 44-64 (CGVC…CEGC) and 80-104 (CPFS…LKRC). Residues 117 to 146 (DEEVQRKREMILKRKEEEALKESLKPKLSE) are hinge. One can recognise an NR LBD domain in the interval 147–444 (EQQKVINILL…LTPLVLEVFG (298 aa)). Residue serine 258 coordinates calcitriol. An interaction with coactivator LXXLL motif region spans residues 267-285 (KMIPGFRDLTAEDQIALLK). Positions 295, 299, 326, and 418 each coordinate calcitriol. The short motif at 437–445 (PLVLEVFGN) is the 9aaTAD element.

The protein belongs to the nuclear hormone receptor family. NR1 subfamily. Homodimer in the absence of bound vitamin D3. Heterodimer with RXRA after vitamin D3 binding.

Its subcellular location is the nucleus. The protein localises to the cytoplasm. Functionally, nuclear receptor for calcitriol, the active form of vitamin D3 which mediates the action of this vitamin on cells. Enters the nucleus upon vitamin D3 binding where it forms heterodimers with the retinoid X receptor/RXR. The VDR-RXR heterodimers bind to specific response elements on DNA and activate the transcription of vitamin D3-responsive target genes. Plays a central role in calcium homeostasis. Also functions as a receptor for the secondary bile acid lithocholic acid (LCA) and its metabolites. In Coturnix japonica (Japanese quail), this protein is Vitamin D3 receptor (VDR).